The chain runs to 343 residues: Heat-inducible transcription repressor HrcA (343 aa).

This sequence belongs to the HrcA family.

Negative regulator of class I heat shock genes (grpE-dnaK-dnaJ and groELS operons). Prevents heat-shock induction of these operons. In Halalkalibacterium halodurans (strain ATCC BAA-125 / DSM 18197 / FERM 7344 / JCM 9153 / C-125) (Bacillus halodurans), this protein is Heat-inducible transcription repressor HrcA.